The primary structure comprises 159 residues: Ribosomal RNA large subunit methyltransferase H (159 aa).

Residues L76, G108, and 127-132 contribute to the S-adenosyl-L-methionine site; that span reads FGRLTL.

This sequence belongs to the RNA methyltransferase RlmH family. Homodimer.

The protein resides in the cytoplasm. It carries out the reaction pseudouridine(1915) in 23S rRNA + S-adenosyl-L-methionine = N(3)-methylpseudouridine(1915) in 23S rRNA + S-adenosyl-L-homocysteine + H(+). In terms of biological role, specifically methylates the pseudouridine at position 1915 (m3Psi1915) in 23S rRNA. This Listeria monocytogenes serotype 4b (strain CLIP80459) protein is Ribosomal RNA large subunit methyltransferase H.